A 330-amino-acid polypeptide reads, in one-letter code: Nitrilase 3 (330 aa).

Residues 4-273 form the CN hydrolase domain; sequence VKAAAVQISP…EGEVIVDLDF (270 aa). The Proton acceptor role is filled by E44. K128 acts as the Proton donor in catalysis. C162 acts as the Nucleophile in catalysis. The segment at 310–330 is disordered; that stretch reads RAAHPVSGAEQGPEDLRTPAA.

Belongs to the carbon-nitrogen hydrolase superfamily. Nitrilase family.

The catalysed reaction is a nitrile + 2 H2O = a carboxylate + NH4(+). Nitrilases catalyze the mild hydrolytic conversion of organonitriles directly to the corresponding carboxylic acids. This is Nitrilase 3 from Unknown prokaryotic organism.